The following is a 150-amino-acid chain: uncharacterized protein (150 aa).

This sequence to A.tumefaciens conjugal transfer protein TraB.

This is an uncharacterized protein from Agrobacterium tumefaciens (strain 15955).